We begin with the raw amino-acid sequence, 351 residues long: Leukotriene B4 receptor 1 (351 aa).

The Extracellular segment spans residues 1–21; it reads MAANTTSTAATSSPGGMSLSL. A glycan (N-linked (GlcNAc...) asparagine) is linked at Asn-4. Residues 22-44 form a helical membrane-spanning segment; it reads LPIVLLSVALVVGLPGNSFVVWS. Over 45-56 the chain is Cytoplasmic; sequence ILKRMQKRSVTA. A helical membrane pass occupies residues 57 to 77; the sequence is LLVLNLALADLAVLLTAPFFL. The Extracellular portion of the chain corresponds to 78–93; sequence HFLARGTWSFEVTGCR. The helical transmembrane segment at 94-115 threads the bilayer; that stretch reads LCHYVCGVSMYASVLLITIMSL. Topologically, residues 116-140 are cytoplasmic; sequence DRSLAVARPFVSQKVRTKAFARWVL. A helical transmembrane segment spans residues 141–161; the sequence is AGIWVVSFLLAIPVLVYRTVT. Over 162-179 the chain is Extracellular; it reads PKNKTLICDSRYPSDGHK. A glycan (N-linked (GlcNAc...) asparagine) is linked at Asn-164. Residues 180–200 form a helical membrane-spanning segment; the sequence is VFHLLFEAITGFLLPFLAVVA. Over 201–222 the chain is Cytoplasmic; that stretch reads SYSDIGRRLQARRFRRSRRTGR. A helical transmembrane segment spans residues 223-243; sequence LVVLIILAFAAFWLPYHLVNL. At 244–268 the chain is on the extracellular side; it reads VEAGRTLAGWDKNSPAGQRLKLARY. Residues 269-289 traverse the membrane as a helical segment; the sequence is VLIALAFLSSSVNPVLYACAG. Residues 290-351 lie on the Cytoplasmic side of the membrane; that stretch reads GGLLRSAGVG…TSSTPPESSK (62 aa). 2 stretches are compositionally biased toward polar residues: residues 311–327 and 339–351; these read EVSS…TPKA and SFMT…ESSK. A disordered region spans residues 311–351; the sequence is EVSSTRRGGTLVQTPKATPTCPEPGPTDSFMTSSTPPESSK.

Belongs to the G-protein coupled receptor 1 family. In terms of processing, phosphorylated by GRK6 upon leukotriene B4 binding; which promotes desensitization. Exclusively expressed in polymorphonuclear leukocytes.

Its subcellular location is the cell membrane. Receptor for leukotriene B4, a potent chemoattractant involved in inflammation and immune response. This is Leukotriene B4 receptor 1 (Ltb4r) from Rattus norvegicus (Rat).